A 136-amino-acid chain; its full sequence is Transmembrane protein 203 (136 aa).

Residues 1–51 are interaction with STING1; the sequence is MLFSLRELVQWLGFATFEIFVHLLALLVFSVLLALRVDGLTPGLSWWNVFV. 4 helical membrane-spanning segments follow: residues 14–34, 50–72, 81–101, and 112–132; these read FATF…VLLA, FVPF…VRLF, VLRL…EMLL, and LWFG…MIRA. The interval 52–136 is required for lysosomal localization of the STING-TMEM203 complex; it reads PFFAADGLST…LLMIRACRVN (85 aa).

As to quaternary structure, homodimer. Interacts with ATP2A2 and ITPR3. Interacts with STIM1 and STING1 (via transmembrane domain).

The protein localises to the endoplasmic reticulum membrane. The protein resides in the endoplasmic reticulum-Golgi intermediate compartment. It localises to the lysosome membrane. In terms of biological role, involved in the regulation of cellular calcium homeotasis. Required for spermatogenesis. Acts as a regulator of STING-mediated inflammatory signaling in macrophages. Forms a complex with STING, promoting the activity of TBK1 kinase and the transcription factor IRF3, leading to activation of type I interferon expression. This Mus musculus (Mouse) protein is Transmembrane protein 203 (Tmem203).